The chain runs to 340 residues: Phosphoribosylformylglycinamidine cyclo-ligase (340 aa).

This sequence belongs to the AIR synthase family.

It is found in the cytoplasm. It catalyses the reaction 2-formamido-N(1)-(5-O-phospho-beta-D-ribosyl)acetamidine + ATP = 5-amino-1-(5-phospho-beta-D-ribosyl)imidazole + ADP + phosphate + H(+). It functions in the pathway purine metabolism; IMP biosynthesis via de novo pathway; 5-amino-1-(5-phospho-D-ribosyl)imidazole from N(2)-formyl-N(1)-(5-phospho-D-ribosyl)glycinamide: step 2/2. In Streptococcus agalactiae serotype III (strain NEM316), this protein is Phosphoribosylformylglycinamidine cyclo-ligase.